Here is a 159-residue protein sequence, read N- to C-terminus: TADNMLNALFYFLLRNPQCLKRLEEEVSCVGATVNELSDDRLAKLPYLNACINETFRIAPAFNGGILQRVSCGATVDGVYVPPGVAVSVDHYTLGHDPQYWVKPDVFNPERWIDPDCKDNFKASRPFLIGARQCPGRQMAYQMFRVCVAKLVYLYTFEL.

A heme-binding site is contributed by Cys134.

It belongs to the cytochrome P450 family. Heme serves as cofactor.

The enzyme catalyses 2 fonsecin B + NADPH + O2 + H(+) = aurasperone B + NADP(+) + 2 H2O. It carries out the reaction 2 rubrofusarin B + NADPH + O2 + H(+) = aurasperone A + NADP(+) + 2 H2O. It functions in the pathway secondary metabolite biosynthesis. In terms of biological role, cytochrome P450 monooxygenase; part of the gene cluster that mediates the biosynthesis of aurasperone B, a dimeric gamma-naphthopyrone. The first step in the biosynthesis of aurasperone B is the production of gamma-naphthopyrone precursor YWA1 by the non-reducing polyketide synthase albA, via condensation of one acetyl-CoA starter unit with 6 malonyl-CoA units. YWA1 is then methylated by aunE at position C-6 to yield foncesin which is further methylated at position C-8 by aunD to produce fonsecin B. A key enzyme in the biosynthetic pathway is the cytochrome P450 monooxygenase aunB which catalyzes the oxidative dimerization of fonsecin B to aurasperone B. AunB also catalyzes the oxidative dimerization of rubrofusarin B into aurasperone A. The protein is Cytochrome P450 monooxygenase aunB of Aspergillus niger (strain ATCC 1015 / CBS 113.46 / FGSC A1144 / LSHB Ac4 / NCTC 3858a / NRRL 328 / USDA 3528.7).